We begin with the raw amino-acid sequence, 260 residues long: Exosome complex component Rrp4 (260 aa).

The region spanning 59–128 (NDVVIGIVIV…SSMKVELALR (70 aa)) is the S1 motif domain. Residues 136 to 194 (KTGQIIKVESVKVPRVIGHGGSMISMLKKETNCSIFVGQNGRIWIDGKDEDIELLSKAL) form the KH domain.

Belongs to the RRP4 family. Component of the archaeal exosome complex. Forms a trimer of Rrp4 and/or Csl4 subunits. The trimer associates with a hexameric ring-like arrangement composed of 3 Rrp41-Rrp42 heterodimers.

It is found in the cytoplasm. Non-catalytic component of the exosome, which is a complex involved in RNA degradation. Increases the RNA binding and the efficiency of RNA degradation. Confers strong poly(A) specificity to the exosome. The polypeptide is Exosome complex component Rrp4 (Methanosarcina acetivorans (strain ATCC 35395 / DSM 2834 / JCM 12185 / C2A)).